The chain runs to 297 residues: tRNA dimethylallyltransferase (297 aa).

10 to 17 (GITASGKS) is an ATP binding site. Position 12–17 (12–17 (TASGKS)) interacts with substrate. The tract at residues 36–39 (DSKQ) is interaction with substrate tRNA.

It belongs to the IPP transferase family. In terms of assembly, monomer. Requires Mg(2+) as cofactor.

It catalyses the reaction adenosine(37) in tRNA + dimethylallyl diphosphate = N(6)-dimethylallyladenosine(37) in tRNA + diphosphate. Functionally, catalyzes the transfer of a dimethylallyl group onto the adenine at position 37 in tRNAs that read codons beginning with uridine, leading to the formation of N6-(dimethylallyl)adenosine (i(6)A). This chain is tRNA dimethylallyltransferase, found in Wolbachia pipientis wMel.